Consider the following 1909-residue polypeptide: NFX1-type zinc finger-containing protein 1 (1909 aa).

Basic and acidic residues-rich tracts occupy residues 1 to 12 (MEDRRPHLEARP) and 76 to 107 (RNQE…EGRS). Disordered stretches follow at residues 1–133 (MEDR…QPQQ) and 787–813 (TQSA…EEEG). Polar residues predominate over residues 113–122 (SSDTFQQWHT). The span at 802–813 (EGEEEEEGEEEG) shows a compositional bias: acidic residues. The stretch at 939 to 964 (RRRILSYERQYRTWAERMAELRLQED) forms a coiled coil. 4 NF-X1-type zinc fingers span residues 1291–1313 (CGHV…QCMK), 1375–1393 (CGHR…LCSE), 1433–1455 (CGHP…RCQQ), and 1463–1480 (CSHK…PCQR). A coiled-coil region spans residues 1733–1764 (LAKKRLSFSSQELSDLQSEIQRLTYLVNLLMR). The RZ-type zinc finger occupies 1818-1889 (ISDEERVQIV…LASEMDGAQH (72 aa)). Positions 1840, 1844, 1860, and 1863 each coordinate Zn(2+).

It belongs to the ZNFX1 family. In terms of assembly, interacts with MAVS.

The protein resides in the mitochondrion outer membrane. Its subcellular location is the cytoplasm. It localises to the stress granule. In terms of biological role, RNA-binding protein that initiates the antiviral response and is required to restrict the replication of RNA viruses. Acts as a double-stranded RNA (dsRNA) sensor that recognizes viral RNA and then interacts with MAVS to initiate the type I interferon response. Also required for immunity against some bacteria, such as mycobacteria. In Mus musculus (Mouse), this protein is NFX1-type zinc finger-containing protein 1.